Consider the following 569-residue polypeptide: Proline--tRNA ligase (569 aa).

Belongs to the class-II aminoacyl-tRNA synthetase family. ProS type 1 subfamily. Homodimer.

Its subcellular location is the cytoplasm. The catalysed reaction is tRNA(Pro) + L-proline + ATP = L-prolyl-tRNA(Pro) + AMP + diphosphate. Functionally, catalyzes the attachment of proline to tRNA(Pro) in a two-step reaction: proline is first activated by ATP to form Pro-AMP and then transferred to the acceptor end of tRNA(Pro). As ProRS can inadvertently accommodate and process non-cognate amino acids such as alanine and cysteine, to avoid such errors it has two additional distinct editing activities against alanine. One activity is designated as 'pretransfer' editing and involves the tRNA(Pro)-independent hydrolysis of activated Ala-AMP. The other activity is designated 'posttransfer' editing and involves deacylation of mischarged Ala-tRNA(Pro). The misacylated Cys-tRNA(Pro) is not edited by ProRS. The protein is Proline--tRNA ligase of Campylobacter jejuni subsp. jejuni serotype O:2 (strain ATCC 700819 / NCTC 11168).